The following is a 749-amino-acid chain: 1,4-alpha-glucan branching enzyme GlgB (749 aa).

D427 (nucleophile) is an active-site residue. The Proton donor role is filled by E480.

This sequence belongs to the glycosyl hydrolase 13 family. GlgB subfamily. In terms of assembly, monomer.

It carries out the reaction Transfers a segment of a (1-&gt;4)-alpha-D-glucan chain to a primary hydroxy group in a similar glucan chain.. The protein operates within glycan biosynthesis; glycogen biosynthesis. Its function is as follows. Catalyzes the formation of the alpha-1,6-glucosidic linkages in glycogen by scission of a 1,4-alpha-linked oligosaccharide from growing alpha-1,4-glucan chains and the subsequent attachment of the oligosaccharide to the alpha-1,6 position. The sequence is that of 1,4-alpha-glucan branching enzyme GlgB from Thermobifida fusca (strain YX).